Here is a 394-residue protein sequence, read N- to C-terminus: Teichoic acid poly(glycerol phosphate) polymerase (394 aa).

This sequence belongs to the CDP-glycerol glycerophosphotransferase family.

It is found in the cell membrane. The enzyme catalyses 4-O-[(2R)-glycerylphospho]-N-acetyl-beta-D-mannosaminyl-(1-&gt;4)-N-acetyl-alpha-D-glucosaminyl di-trans,octa-cis-undecaprenyl diphosphate + n CDP-glycerol = 4-O-{[(2R)-1-glycerylphospho](n)-(2R)-1-glycerylphospho}-N-acetyl-beta-D-mannosaminyl-(1-&gt;4)-N-acetyl-alpha-D-glucosaminyl undecaprenyl diphosphate + n CMP + n H(+). Catalyzes the addition of further 2-8 glycerol phosphate units from CDP-glycerol to the single glycerol phosphate unit bound to the prenolpyrophosphate-linked disaccharide. The function in the cell is unknown since the product is not part of the poly(ribitol phosphate) teichoic acid found in the cell walls. This is Teichoic acid poly(glycerol phosphate) polymerase (tarF) from Bacillus spizizenii (strain ATCC 23059 / NRRL B-14472 / W23) (Bacillus subtilis subsp. spizizenii).